The primary structure comprises 156 residues: CASP-like protein 5C1 (156 aa).

Residues 1–21 are Cytoplasmic-facing; that stretch reads MENRERAGAGAVGSAGSLGLR. Residues 22 to 42 traverse the membrane as a helical segment; it reads VGQAVFSSASLLFMSVGVEFF. The Extracellular portion of the chain corresponds to 43–46; the sequence is SYTA. Residues 47–67 form a helical membrane-spanning segment; that stretch reads FCFLVTIMGLVIPWSCTLAMI. The Cytoplasmic segment spans residues 68-81; sequence DVYSILVGCPLRVP. Residues 82-102 form a helical membrane-spanning segment; that stretch reads GVMVIVVIGDWVLAILSLAAA. The Extracellular segment spans residues 103–132; sequence SSSAAVIDLLLQFHGSHCSPRFCGRYQLSA. Residues 133-153 form a helical membrane-spanning segment; it reads MMAFLSWFLTAASSLFNLWFI. Over 154 to 156 the chain is Cytoplasmic; it reads ASR.

The protein belongs to the Casparian strip membrane proteins (CASP) family. In terms of assembly, homodimer and heterodimers.

Its subcellular location is the cell membrane. The sequence is that of CASP-like protein 5C1 from Oryza sativa subsp. japonica (Rice).